Consider the following 1235-residue polypeptide: ATP-dependent helicase/nuclease subunit A (1235 aa).

In terms of domain architecture, UvrD-like helicase ATP-binding spans 12–482 (SLWTDDQWKA…IDLSQNFRSR (471 aa)). Position 33–40 (33–40 (AAAGSGKT)) interacts with ATP. In terms of domain architecture, UvrD-like helicase C-terminal spans 509–800 (AAELTLGASF…RMMTIHASKG (292 aa)).

The protein belongs to the helicase family. AddA subfamily. Heterodimer of AddA and AddB/RexB. Mg(2+) is required as a cofactor.

The enzyme catalyses Couples ATP hydrolysis with the unwinding of duplex DNA by translocating in the 3'-5' direction.. The catalysed reaction is ATP + H2O = ADP + phosphate + H(+). The heterodimer acts as both an ATP-dependent DNA helicase and an ATP-dependent, dual-direction single-stranded exonuclease. Recognizes the chi site generating a DNA molecule suitable for the initiation of homologous recombination. The AddA nuclease domain is required for chi fragment generation; this subunit has the helicase and 3' -&gt; 5' nuclease activities. In Listeria monocytogenes serotype 4b (strain F2365), this protein is ATP-dependent helicase/nuclease subunit A.